The sequence spans 359 residues: GTP 3',8-cyclase 1 (359 aa).

A Radical SAM core domain is found at 21–241 (RCRRMMGDLR…SLEKRYGRIE (221 aa)). Residue Arg30 coordinates GTP. Residues Cys37 and Cys41 each contribute to the [4Fe-4S] cluster site. Tyr43 serves as a coordination point for S-adenosyl-L-methionine. Cys44 contributes to the [4Fe-4S] cluster binding site. Arg80 contacts GTP. Gly84 is a binding site for S-adenosyl-L-methionine. A GTP-binding site is contributed by Thr115. Ser139 serves as a coordination point for S-adenosyl-L-methionine. Position 176 (Lys176) interacts with GTP. S-adenosyl-L-methionine is bound at residue Met210. Residues Cys273 and Cys276 each coordinate [4Fe-4S] cluster. 278 to 280 (RSR) lines the GTP pocket. Cys290 provides a ligand contact to [4Fe-4S] cluster.

This sequence belongs to the radical SAM superfamily. MoaA family. As to quaternary structure, monomer and homodimer. Requires [4Fe-4S] cluster as cofactor.

It carries out the reaction GTP + AH2 + S-adenosyl-L-methionine = (8S)-3',8-cyclo-7,8-dihydroguanosine 5'-triphosphate + 5'-deoxyadenosine + L-methionine + A + H(+). The protein operates within cofactor biosynthesis; molybdopterin biosynthesis. In terms of biological role, catalyzes the cyclization of GTP to (8S)-3',8-cyclo-7,8-dihydroguanosine 5'-triphosphate. The sequence is that of GTP 3',8-cyclase 1 from Mycobacterium tuberculosis (strain CDC 1551 / Oshkosh).